Reading from the N-terminus, the 326-residue chain is Tetraacyldisaccharide 4'-kinase (326 aa).

Residue 55 to 62 participates in ATP binding; that stretch reads TAGGNGKT.

The protein belongs to the LpxK family.

The catalysed reaction is a lipid A disaccharide + ATP = a lipid IVA + ADP + H(+). It participates in glycolipid biosynthesis; lipid IV(A) biosynthesis; lipid IV(A) from (3R)-3-hydroxytetradecanoyl-[acyl-carrier-protein] and UDP-N-acetyl-alpha-D-glucosamine: step 6/6. Its function is as follows. Transfers the gamma-phosphate of ATP to the 4'-position of a tetraacyldisaccharide 1-phosphate intermediate (termed DS-1-P) to form tetraacyldisaccharide 1,4'-bis-phosphate (lipid IVA). This Erwinia tasmaniensis (strain DSM 17950 / CFBP 7177 / CIP 109463 / NCPPB 4357 / Et1/99) protein is Tetraacyldisaccharide 4'-kinase.